Here is a 224-residue protein sequence, read N- to C-terminus: tRNA (guanine-N(7)-)-methyltransferase (224 aa).

Positions 54, 79, 106, and 129 each coordinate S-adenosyl-L-methionine. Residue Asp129 is part of the active site. The substrate site is built by Lys133 and Asp165.

This sequence belongs to the class I-like SAM-binding methyltransferase superfamily. TrmB family.

The enzyme catalyses guanosine(46) in tRNA + S-adenosyl-L-methionine = N(7)-methylguanosine(46) in tRNA + S-adenosyl-L-homocysteine. The protein operates within tRNA modification; N(7)-methylguanine-tRNA biosynthesis. Functionally, catalyzes the formation of N(7)-methylguanine at position 46 (m7G46) in tRNA. This is tRNA (guanine-N(7)-)-methyltransferase from Chlamydia abortus (strain DSM 27085 / S26/3) (Chlamydophila abortus).